A 79-amino-acid chain; its full sequence is Calcium/calmodulin-dependent protein kinase II inhibitor 2 (79 aa).

The segment at 43–69 is inhibitory domain; that stretch reads KRPPKLGQIGRAKRVVIEDDRIDEVLK.

Belongs to the CAMK2N family.

It is found in the nucleus. The protein resides in the cytoplasm. It localises to the cytosol. In terms of biological role, potent and specific cellular inhibitor of CaM-kinase II (CAMK2). Traps Ca(2+)/calmodulin on CAMK2. The chain is Calcium/calmodulin-dependent protein kinase II inhibitor 2 (camk2n2) from Xenopus tropicalis (Western clawed frog).